Here is a 132-residue protein sequence, read N- to C-terminus: Small ribosomal subunit protein uS8c (132 aa).

The protein belongs to the universal ribosomal protein uS8 family. As to quaternary structure, part of the 30S ribosomal subunit.

Its subcellular location is the plastid. The protein resides in the chloroplast. Its function is as follows. One of the primary rRNA binding proteins, it binds directly to 16S rRNA central domain where it helps coordinate assembly of the platform of the 30S subunit. The polypeptide is Small ribosomal subunit protein uS8c (rps8) (Marchantia polymorpha (Common liverwort)).